Reading from the N-terminus, the 210-residue chain is Orotate phosphoribosyltransferase (210 aa).

Residues arginine 97, lysine 101, histidine 103, and 123–131 (EDLISTGGS) each bind 5-phospho-alpha-D-ribose 1-diphosphate. Serine 127 serves as a coordination point for orotate.

Belongs to the purine/pyrimidine phosphoribosyltransferase family. PyrE subfamily. Homodimer. Mg(2+) is required as a cofactor.

It catalyses the reaction orotidine 5'-phosphate + diphosphate = orotate + 5-phospho-alpha-D-ribose 1-diphosphate. The protein operates within pyrimidine metabolism; UMP biosynthesis via de novo pathway; UMP from orotate: step 1/2. Functionally, catalyzes the transfer of a ribosyl phosphate group from 5-phosphoribose 1-diphosphate to orotate, leading to the formation of orotidine monophosphate (OMP). In Porphyromonas gingivalis (strain ATCC BAA-308 / W83), this protein is Orotate phosphoribosyltransferase.